The sequence spans 396 residues: Multidrug efflux protein YfmO (396 aa).

The next 12 membrane-spanning stretches (helical) occupy residues 20–40, 56–76, 80–100, 114–134, 142–162, 171–191, 214–234, 249–269, 278–298, 301–321, 339–359, and 364–384; these read VWAVAFACVISFMGIGLVDPI, SLLFTSYLLVTGFMMFFSGAI, IGAKWTLILGLIFIIVFAGLG, GGWGLGNALFISTALAVIVGV, AIILYEAALGLGISVGPLAGG, APFFGVSVLMFIALIAISFML, GLLTMAVSAFLYNFGFFILLA, YVFFGWGLLLAITSVFTAPLV, SLVVLFIAFAAILVIMGIWTD, TLIITCIVVAGAVLGMVNTIM, AYSSVRFIGGALAPWIAGMLS, and ASTPYTVGGIVVFVGMLVLLM.

It belongs to the major facilitator superfamily.

The protein localises to the cell membrane. Functionally, acts to efflux copper or a copper complex. It is possible that YfmO could contribute to copper resistance. The protein is Multidrug efflux protein YfmO (yfmO) of Bacillus subtilis (strain 168).